A 471-amino-acid polypeptide reads, in one-letter code: Cytochrome P450 monooxygenase afvE (471 aa).

The chain crosses the membrane as a helical span at residues Ile265–Tyr285. Residue Cys410 participates in heme binding.

This sequence belongs to the cytochrome P450 family. The cofactor is heme.

The protein localises to the membrane. It functions in the pathway secondary metabolite biosynthesis. In terms of biological role, cytochrome P450 monooxygenase; part of the gene cluster that mediates the biosynthesis of aflavarin, a bicoumarin that exhibits anti-insectan activity against the fungivorous beetle C.hemipterus. This Aspergillus flavus (strain ATCC 200026 / FGSC A1120 / IAM 13836 / NRRL 3357 / JCM 12722 / SRRC 167) protein is Cytochrome P450 monooxygenase afvE.